Here is a 104-residue protein sequence, read N- to C-terminus: Iron-sulfur cluster assembly protein CyaY (104 aa).

The protein belongs to the frataxin family.

Its function is as follows. Involved in iron-sulfur (Fe-S) cluster assembly. May act as a regulator of Fe-S biogenesis. The sequence is that of Iron-sulfur cluster assembly protein CyaY from Vibrio campbellii (strain ATCC BAA-1116).